The sequence spans 207 residues: MFTGLVEDLGKVKNLTLSSKGAKLSVETKLEDVKLGDSVSVNGACLTVVDIKSSTLTFDVSPETLKRTNLGKLKTGDYVNLERALRVGERLGGHIVQGHVDFTAPVKSFNFLGEHYELVIEIPEEWSIYVVEKGSIALDGISLTVNYVKENKVFINIIPHTYKSTNLQFKKVGDLLNVETDILGKYVINYLNKLKKKEDIFKEFLKW.

Lumazine-binding repeat units follow at residues 1–94 and 95–191; these read MFTG…LGGH and IVQG…INYL. Residues 4-6, 45-47, 59-64, 98-100, Lys-133, 142-144, and 156-161 contribute to the 2,4-dihydroxypteridine site; these read GLV, CLT, DVSPET, GHV, SLT, and NIIPHT.

In terms of assembly, homotrimer.

The catalysed reaction is 2 6,7-dimethyl-8-(1-D-ribityl)lumazine + H(+) = 5-amino-6-(D-ribitylamino)uracil + riboflavin. Its pathway is cofactor biosynthesis; riboflavin biosynthesis; riboflavin from 2-hydroxy-3-oxobutyl phosphate and 5-amino-6-(D-ribitylamino)uracil: step 2/2. Functionally, catalyzes the dismutation of two molecules of 6,7-dimethyl-8-ribityllumazine, resulting in the formation of riboflavin and 5-amino-6-(D-ribitylamino)uracil. The polypeptide is Riboflavin synthase (ribE) (Aquifex aeolicus (strain VF5)).